The following is a 443-amino-acid chain: Xaa-Pro dipeptidase (443 aa).

Residues Asp-246, Asp-257, His-339, Glu-384, and Glu-423 each coordinate Mn(2+).

This sequence belongs to the peptidase M24B family. Bacterial-type prolidase subfamily. Mn(2+) is required as a cofactor.

It carries out the reaction Xaa-L-Pro dipeptide + H2O = an L-alpha-amino acid + L-proline. Splits dipeptides with a prolyl residue in the C-terminal position. This is Xaa-Pro dipeptidase from Escherichia coli O8 (strain IAI1).